Here is a 928-residue protein sequence, read N- to C-terminus: Kinesin heavy chain (928 aa).

Residues 7-330 (SIKVVARFRP…LRFGMRAKSI (324 aa)) enclose the Kinesin motor domain. ATP-binding positions include 88–95 (GQTGAGKS) and 238–245 (GSEKVGKT). The stretch at 343–866 (AELKQMLAKA…VKDRLEAAKA (524 aa)) forms a coiled coil. A compositionally biased stretch (low complexity) spans 395–409 (SKSASTTARPSTPSR). Disordered regions lie at residues 395-434 (SKSA…PLDK) and 893-928 (GGGD…FQKS). Residues 905 to 928 (NPTIATLQQNPPENKRSSWFFQKS) show a composition bias toward polar residues.

The protein belongs to the TRAFAC class myosin-kinesin ATPase superfamily. Kinesin family. Kinesin subfamily.

It localises to the cytoplasm. The protein localises to the cytoskeleton. In terms of biological role, kinesin is a microtubule-associated force-producing protein that may play a role in organelle transport. Its motor activity is directed toward the microtubule's plus end. In Neurospora crassa (strain ATCC 24698 / 74-OR23-1A / CBS 708.71 / DSM 1257 / FGSC 987), this protein is Kinesin heavy chain (kin).